The chain runs to 207 residues: Protein FAM177A1 (207 aa).

Methionine 1 is subject to N-acetylmethionine. Serine 65 carries the phosphoserine modification. A Phosphothreonine modification is found at threonine 66. Positions 131-170 form a coiled coil; it reads IDEYYRMKKEEEEEEEENRMSEEAERQYQQNKLQADSIVQ. A disordered region spans residues 142–176; it reads EEEEEENRMSEEAERQYQQNKLQADSIVQTDQPET. Residues 157–176 are compositionally biased toward polar residues; that stretch reads QYQQNKLQADSIVQTDQPET.

The protein belongs to the FAM177 family.

The sequence is that of Protein FAM177A1 (Fam177a1) from Mus musculus (Mouse).